Consider the following 664-residue polypeptide: Fructose-1,6-bisphosphatase class 3 (664 aa).

Belongs to the FBPase class 3 family. The cofactor is Mn(2+).

The catalysed reaction is beta-D-fructose 1,6-bisphosphate + H2O = beta-D-fructose 6-phosphate + phosphate. Its pathway is carbohydrate biosynthesis; gluconeogenesis. The sequence is that of Fructose-1,6-bisphosphatase class 3 from Bacteroides thetaiotaomicron (strain ATCC 29148 / DSM 2079 / JCM 5827 / CCUG 10774 / NCTC 10582 / VPI-5482 / E50).